The sequence spans 665 residues: Translation factor guf1, mitochondrial (665 aa).

The transit peptide at 1–53 (MRGCLQVLRWLSTSPARRPVSSGLRLRSYEIVSPSILRPFTSTVRRQAQASRN) directs the protein to the mitochondrion. The 181-residue stretch at 67 to 247 (ERFRNFCIVA…TVIERIPAPV (181 aa)) folds into the tr-type G domain. GTP-binding positions include 76 to 83 (AHVDHGKS), 140 to 144 (DTPGH), and 194 to 197 (NKVD).

This sequence belongs to the TRAFAC class translation factor GTPase superfamily. Classic translation factor GTPase family. LepA subfamily.

It is found in the mitochondrion inner membrane. It catalyses the reaction GTP + H2O = GDP + phosphate + H(+). Its function is as follows. Promotes mitochondrial protein synthesis. May act as a fidelity factor of the translation reaction, by catalyzing a one-codon backward translocation of tRNAs on improperly translocated ribosomes. Binds to mitochondrial ribosomes in a GTP-dependent manner. This is Translation factor guf1, mitochondrial (guf1) from Talaromyces stipitatus (strain ATCC 10500 / CBS 375.48 / QM 6759 / NRRL 1006) (Penicillium stipitatum).